An 877-amino-acid polypeptide reads, in one-letter code: Alanine--tRNA ligase (877 aa).

Residues histidine 562, histidine 566, cysteine 664, and histidine 668 each coordinate Zn(2+).

Belongs to the class-II aminoacyl-tRNA synthetase family. The cofactor is Zn(2+).

Its subcellular location is the cytoplasm. It catalyses the reaction tRNA(Ala) + L-alanine + ATP = L-alanyl-tRNA(Ala) + AMP + diphosphate. Its function is as follows. Catalyzes the attachment of alanine to tRNA(Ala) in a two-step reaction: alanine is first activated by ATP to form Ala-AMP and then transferred to the acceptor end of tRNA(Ala). Also edits incorrectly charged Ser-tRNA(Ala) and Gly-tRNA(Ala) via its editing domain. This is Alanine--tRNA ligase from Picosynechococcus sp. (strain ATCC 27264 / PCC 7002 / PR-6) (Agmenellum quadruplicatum).